The chain runs to 383 residues: GTPase-interacting component 2 (383 aa).

Residues 63–106 (SNKKNIELPPLSPNSHPSCHHRRSNSNSAKSKESSSSSSSANKT) are disordered. A compositionally biased stretch (low complexity) spans 87 to 105 (NSNSAKSKESSSSSSSANK). A CRIB domain is found at 134 to 147 (ISTPFDFQHISHAD). Residues 155 to 165 (EQLQEPSSLST) are compositionally biased toward polar residues. The tract at residues 155-189 (EQLQEPSSLSTEIKDDYTSSSSKRDSKSLNKAFVT) is disordered. The segment covering 166–182 (EIKDDYTSSSSKRDSKS) has biased composition (basic and acidic residues). Phosphoserine occurs at positions 254, 258, 337, 345, and 367. A disordered region spans residues 319–361 (ETPNSNKDSAKAFFPSRQSPLPKRRNSIATPSPQSKFSYSDSP). The span at 345 to 361 (SIATPSPQSKFSYSDSP) shows a compositional bias: polar residues.

Belongs to the BORG/CEP family. Interacts with GTP-bound CDC42.

The protein resides in the bud neck. The protein localises to the bud tip. It localises to the cytoplasm. It is found in the cell cortex. Its subcellular location is the cytoskeleton. In terms of biological role, required for cell size and shape control, bud site selection, bud emergence, actin cytoskeletal organization, mitotic spindle orientation/positioning, and mating projection formation in response to mating pheromone. The sequence is that of GTPase-interacting component 2 (GIC2) from Saccharomyces cerevisiae (strain ATCC 204508 / S288c) (Baker's yeast).